Reading from the N-terminus, the 163-residue chain is Phosphopantetheine adenylyltransferase (163 aa).

T9 is a binding site for substrate. Residues 9 to 10 (TF) and H17 each bind ATP. 3 residues coordinate substrate: K41, T73, and R87. ATP is bound by residues 88-90 (GLR), E98, and 123-129 (FSFISSS).

It belongs to the bacterial CoaD family. As to quaternary structure, homohexamer. Mg(2+) serves as cofactor.

It is found in the cytoplasm. The catalysed reaction is (R)-4'-phosphopantetheine + ATP + H(+) = 3'-dephospho-CoA + diphosphate. It participates in cofactor biosynthesis; coenzyme A biosynthesis; CoA from (R)-pantothenate: step 4/5. In terms of biological role, reversibly transfers an adenylyl group from ATP to 4'-phosphopantetheine, yielding dephospho-CoA (dPCoA) and pyrophosphate. The polypeptide is Phosphopantetheine adenylyltransferase (Desulfitobacterium hafniense (strain Y51)).